The sequence spans 88 residues: MKTMHRSRSWRRKYVRTPGGRTVIHFERKKPKVAHCAMCGRPLNGIPRGRPNELRKLPKTKKRPERPMPNLCPSCMRRIMKAQARATL.

Residues 41 to 72 (RPLNGIPRGRPNELRKLPKTKKRPERPMPNLC) form a disordered region.

It belongs to the eukaryotic ribosomal protein eL34 family.

This is Large ribosomal subunit protein eL34 from Thermococcus sibiricus (strain DSM 12597 / MM 739).